A 205-amino-acid polypeptide reads, in one-letter code: Glycerol-3-phosphate acyltransferase (205 aa).

A run of 6 helical transmembrane segments spans residues 5 to 25, 56 to 76, 84 to 104, 114 to 134, 144 to 164, and 165 to 185; these read LIAT…YIIA, ICVL…AIAL, VPAL…YFGF, IGVV…VAIL, LGSL…LPFF, and HYPL…LWRH.

The protein belongs to the PlsY family. In terms of assembly, probably interacts with PlsX.

It is found in the cell membrane. It carries out the reaction an acyl phosphate + sn-glycerol 3-phosphate = a 1-acyl-sn-glycero-3-phosphate + phosphate. The protein operates within lipid metabolism; phospholipid metabolism. In terms of biological role, catalyzes the transfer of an acyl group from acyl-phosphate (acyl-PO(4)) to glycerol-3-phosphate (G3P) to form lysophosphatidic acid (LPA). This enzyme utilizes acyl-phosphate as fatty acyl donor, but not acyl-CoA or acyl-ACP. The sequence is that of Glycerol-3-phosphate acyltransferase from Shouchella clausii (strain KSM-K16) (Alkalihalobacillus clausii).